The following is a 238-amino-acid chain: Transmembrane protein 127 (238 aa).

Met-1 carries the post-translational modification N-acetylmethionine. The segment covering Met-1–Gly-11 has biased composition (gly residues). The tract at residues Met-1–Pro-27 is disordered. A Phosphoserine modification is found at Ser-17. 3 consecutive transmembrane segments (helical) span residues Ile-96–Phe-116, Ala-130–Ala-150, and Val-169–Leu-189.

This sequence belongs to the TMEM127 family.

The protein localises to the cell membrane. It localises to the cytoplasm. Its function is as follows. Controls cell proliferation acting as a negative regulator of TOR signaling pathway mediated by mTORC1. May act as a tumor suppressor. This Mus musculus (Mouse) protein is Transmembrane protein 127 (Tmem127).